The chain runs to 332 residues: Putative pumilio homolog 17 (332 aa).

The region spanning 1–302 (MTNINRLSMS…ILTADLFYSL (302 aa)) is the PUM-HD domain. The stretch at 82–117 (SDSDYFMVITRNKNGSKSLQKLMRMSDDMDVFFFVA) is one Pumilio 1 repeat. Residues 118–152 (IMRLFIHVMIDKYASYVAIQGMRIFKQDKRELMYD) form a Pumilio 2; degenerate repeat. 4 Pumilio repeats span residues 153–188 (HILRYALFLARDQYGCIALNEIIKELDDPYYRDELM), 189–225 (DIVSNNALLLSNDAYGNFVVQHVLKLHDSRCTGNIAD), 226–264 (KLCGYCVELSFKKYGSYIVERLLEVRDIPMATIVLDLLA), and 265–300 (CKTEMLIRLARSENGNFVVCKLLELTNDILTADLFY).

It is found in the cytoplasm. Sequence-specific RNA-binding protein that regulates translation and mRNA stability by binding the 3'-UTR of target mRNAs. The protein is Putative pumilio homolog 17 (APUM17) of Arabidopsis thaliana (Mouse-ear cress).